The primary structure comprises 194 residues: Imidazole glycerol phosphate synthase subunit HisH (194 aa).

Residues 1–194 (MIIIDTGCAN…QLLKNFVENL (194 aa)) enclose the Glutamine amidotransferase type-1 domain. The active-site Nucleophile is the cysteine 75. Catalysis depends on residues histidine 175 and glutamate 177.

As to quaternary structure, heterodimer of HisH and HisF.

It is found in the cytoplasm. It catalyses the reaction 5-[(5-phospho-1-deoxy-D-ribulos-1-ylimino)methylamino]-1-(5-phospho-beta-D-ribosyl)imidazole-4-carboxamide + L-glutamine = D-erythro-1-(imidazol-4-yl)glycerol 3-phosphate + 5-amino-1-(5-phospho-beta-D-ribosyl)imidazole-4-carboxamide + L-glutamate + H(+). The catalysed reaction is L-glutamine + H2O = L-glutamate + NH4(+). It functions in the pathway amino-acid biosynthesis; L-histidine biosynthesis; L-histidine from 5-phospho-alpha-D-ribose 1-diphosphate: step 5/9. Its function is as follows. IGPS catalyzes the conversion of PRFAR and glutamine to IGP, AICAR and glutamate. The HisH subunit catalyzes the hydrolysis of glutamine to glutamate and ammonia as part of the synthesis of IGP and AICAR. The resulting ammonia molecule is channeled to the active site of HisF. The sequence is that of Imidazole glycerol phosphate synthase subunit HisH from Mannheimia succiniciproducens (strain KCTC 0769BP / MBEL55E).